The sequence spans 343 residues: N-acetyl-gamma-glutamyl-phosphate reductase (343 aa).

Residue cysteine 149 is part of the active site.

Belongs to the NAGSA dehydrogenase family. Type 1 subfamily.

The protein resides in the cytoplasm. It catalyses the reaction N-acetyl-L-glutamate 5-semialdehyde + phosphate + NADP(+) = N-acetyl-L-glutamyl 5-phosphate + NADPH + H(+). It participates in amino-acid biosynthesis; L-arginine biosynthesis; N(2)-acetyl-L-ornithine from L-glutamate: step 3/4. Catalyzes the NADPH-dependent reduction of N-acetyl-5-glutamyl phosphate to yield N-acetyl-L-glutamate 5-semialdehyde. The protein is N-acetyl-gamma-glutamyl-phosphate reductase of Exiguobacterium sibiricum (strain DSM 17290 / CCUG 55495 / CIP 109462 / JCM 13490 / 255-15).